A 120-amino-acid chain; its full sequence is uncharacterized protein (120 aa).

The protein resides in the mitochondrion. This is an uncharacterized protein from Arabidopsis thaliana (Mouse-ear cress).